A 331-amino-acid polypeptide reads, in one-letter code: Glycerol-3-phosphate dehydrogenase [NAD(P)+] (331 aa).

NADPH-binding residues include S10, W11, R31, R32, and K105. The sn-glycerol 3-phosphate site is built by K105 and G135. Residue A139 participates in NADPH binding. Residues K190, D243, S253, R254, and N255 each coordinate sn-glycerol 3-phosphate. Catalysis depends on K190, which acts as the Proton acceptor. R254 is a binding site for NADPH. The NADPH site is built by V279 and E281.

Belongs to the NAD-dependent glycerol-3-phosphate dehydrogenase family.

The protein resides in the cytoplasm. It carries out the reaction sn-glycerol 3-phosphate + NAD(+) = dihydroxyacetone phosphate + NADH + H(+). The catalysed reaction is sn-glycerol 3-phosphate + NADP(+) = dihydroxyacetone phosphate + NADPH + H(+). Its pathway is membrane lipid metabolism; glycerophospholipid metabolism. In terms of biological role, catalyzes the reduction of the glycolytic intermediate dihydroxyacetone phosphate (DHAP) to sn-glycerol 3-phosphate (G3P), the key precursor for phospholipid synthesis. The sequence is that of Glycerol-3-phosphate dehydrogenase [NAD(P)+] from Corynebacterium diphtheriae (strain ATCC 700971 / NCTC 13129 / Biotype gravis).